The following is a 159-amino-acid chain: Eukaryotic translation initiation factor 5A-4 (159 aa).

Residues 1–12 show a composition bias toward basic and acidic residues; it reads MSDEEHQFESKA. Residues 1-21 are disordered; the sequence is MSDEEHQFESKADAGASKTYP. Position 52 is a hypusine (K52).

Belongs to the eIF-5A family. In terms of processing, lys-52 undergoes hypusination, a unique post-translational modification that consists in the addition of a butylamino group from spermidine to lysine side chain, leading to the formation of the unusual amino acid hypusine. eIF-5As are the only known proteins to undergo this modification, which is essential for their function.

Translation factor that promotes translation elongation and termination, particularly upon ribosome stalling at specific amino acid sequence contexts. Binds between the exit (E) and peptidyl (P) site of the ribosome and promotes rescue of stalled ribosome: specifically required for efficient translation of polyproline-containing peptides as well as other motifs that stall the ribosome. Acts as a ribosome quality control (RQC) cofactor by joining the RQC complex to facilitate peptidyl transfer during CAT tailing step. The chain is Eukaryotic translation initiation factor 5A-4 (EIF5A4) from Solanum tuberosum (Potato).